The primary structure comprises 246 residues: Endonuclease V (246 aa).

Mg(2+) contacts are provided by Asp50 and Asp120.

This sequence belongs to the endonuclease V family. The cofactor is Mg(2+).

It localises to the cytoplasm. It catalyses the reaction Endonucleolytic cleavage at apurinic or apyrimidinic sites to products with a 5'-phosphate.. DNA repair enzyme involved in the repair of deaminated bases. Selectively cleaves double-stranded DNA at the second phosphodiester bond 3' to a deoxyinosine leaving behind the intact lesion on the nicked DNA. This Gloeobacter violaceus (strain ATCC 29082 / PCC 7421) protein is Endonuclease V.